The sequence spans 446 residues: Probable glucan endo-1,3-beta-glucosidase eglC (446 aa).

Residues methionine 1–alanine 18 form the signal peptide. Glutamate 128 (proton donor) is an active-site residue. Asparagine 183 is a glycosylation site (N-linked (GlcNAc...) asparagine). Residue glutamate 239 is the Nucleophile of the active site. N-linked (GlcNAc...) asparagine glycans are attached at residues asparagine 364 and asparagine 370. The disordered stretch occupies residues serine 393–serine 416. A compositionally biased stretch (low complexity) spans alanine 401 to serine 416. Residue asparagine 423 is the site of GPI-anchor amidated asparagine attachment. The propeptide at alanine 424–leucine 446 is removed in mature form.

It belongs to the glycosyl hydrolase 17 family. In terms of processing, the GPI-anchor is attached to the protein in the endoplasmic reticulum and serves to target the protein to the cell surface. There, the glucosamine-inositol phospholipid moiety is cleaved off and the GPI-modified mannoprotein is covalently attached via its lipidless GPI glycan remnant to the 1,6-beta-glucan of the outer cell wall layer.

Its subcellular location is the cell membrane. The protein localises to the secreted. It localises to the cell wall. It carries out the reaction Hydrolysis of (1-&gt;3)-beta-D-glucosidic linkages in (1-&gt;3)-beta-D-glucans.. In terms of biological role, glucanases play a role in cell expansion during growth, in cell-cell fusion during mating, and in spore release during sporulation. This enzyme may be involved in beta-glucan degradation and also function biosynthetically as a transglycosylase. The protein is Probable glucan endo-1,3-beta-glucosidase eglC (eglC) of Aspergillus fumigatus (strain ATCC MYA-4609 / CBS 101355 / FGSC A1100 / Af293) (Neosartorya fumigata).